A 331-amino-acid chain; its full sequence is MLKHTAKALVCALSLTVAGIVQAADPIVIKFSHVVAEHTPKGQGALLFKKLVEERLPGKVKVEVYPNSSLFGDGKEMEALLLGDVQIIAPSLAKFEQYTKKLQIFDLPFLFDNIQAVDRFQQSPQGKELLTSMQDKGITGLGYWHNGMKQLSANKPLREPKDARGLKFRVQASKVLEEQFKAVRANPRKMSFAEVYQGLQTGVVNGTENPWSNIYSQKMHEVQKYITESDHGVLDYMVITNTKFWNGLPEDVRGVLAKTMDEVTVEVNKQAEALNQGDKQRIVEAKTSEIIELTPEQRAEWRKAMQPVWKKFEGEIGADLIKAAEAANQAQ.

Residues 1 to 23 (MLKHTAKALVCALSLTVAGIVQA) form the signal peptide.

Belongs to the bacterial solute-binding protein 7 family. As to quaternary structure, the complex comprises the extracytoplasmic solute receptor protein DctP, and the two transmembrane proteins DctQ and DctM.

The protein localises to the periplasm. Part of the tripartite ATP-independent periplasmic (TRAP) transport system DctPQM involved in C4-dicarboxylates uptake. The sequence is that of C4-dicarboxylate-binding periplasmic protein DctP from Pseudomonas aeruginosa (strain ATCC 15692 / DSM 22644 / CIP 104116 / JCM 14847 / LMG 12228 / 1C / PRS 101 / PAO1).